A 231-amino-acid chain; its full sequence is Ribose-5-phosphate isomerase A (231 aa).

Substrate contacts are provided by residues 32-35 (TGST), 85-88 (DGAD), and 98-101 (KGGG). E107 (proton acceptor) is an active-site residue. Position 125 (K125) interacts with substrate.

This sequence belongs to the ribose 5-phosphate isomerase family. Homodimer.

It catalyses the reaction aldehydo-D-ribose 5-phosphate = D-ribulose 5-phosphate. It functions in the pathway carbohydrate degradation; pentose phosphate pathway; D-ribose 5-phosphate from D-ribulose 5-phosphate (non-oxidative stage): step 1/1. Catalyzes the reversible conversion of ribose-5-phosphate to ribulose 5-phosphate. This chain is Ribose-5-phosphate isomerase A, found in Burkholderia orbicola (strain MC0-3).